A 342-amino-acid chain; its full sequence is 3-isopropylmalate dehydrogenase (342 aa).

Arg87, Arg97, Arg121, and Asp212 together coordinate substrate. Residues Asp212, Asp236, and Asp240 each coordinate Mg(2+). Position 272-284 (272-284 (GSAPDIAGRQLAD)) interacts with NAD(+). A compositionally biased stretch (low complexity) spans 319–328 (RAAAGAAQPS). Residues 319 to 342 (RAAAGAAQPSTRERGEDLAARAAG) are disordered. The segment covering 329-342 (TRERGEDLAARAAG) has biased composition (basic and acidic residues).

It belongs to the isocitrate and isopropylmalate dehydrogenases family. LeuB type 2 subfamily. In terms of assembly, homodimer. Mg(2+) is required as a cofactor. Mn(2+) serves as cofactor.

The protein localises to the cytoplasm. It carries out the reaction (2R,3S)-3-isopropylmalate + NAD(+) = 4-methyl-2-oxopentanoate + CO2 + NADH. It participates in amino-acid biosynthesis; L-leucine biosynthesis; L-leucine from 3-methyl-2-oxobutanoate: step 3/4. Its function is as follows. Catalyzes the oxidation of 3-carboxy-2-hydroxy-4-methylpentanoate (3-isopropylmalate) to 3-carboxy-4-methyl-2-oxopentanoate. The product decarboxylates to 4-methyl-2 oxopentanoate. The chain is 3-isopropylmalate dehydrogenase from Frankia casuarinae (strain DSM 45818 / CECT 9043 / HFP020203 / CcI3).